The following is a 130-amino-acid chain: MSGRGKQGGKARAKAKTRSSRAGLQFPVGRVHRLLRKGNYAERVGAGAPVYLAAVLEYLTAEILELAGNAARDNKKTRIIPRHLQLAIRNDEELNKLLGRVTIAQGGVLPNIQAVLLPKKTESHHKAKGK.

The disordered stretch occupies residues 1–22; it reads MSGRGKQGGKARAKAKTRSSRA. N-acetylserine is present on serine 2. Serine 2 is subject to Phosphoserine; by RPS6KA5. Arginine 4 carries the citrulline; alternate modification. Arginine 4 is modified (symmetric dimethylarginine; by PRMT5; alternate). N6-(2-hydroxyisobutyryl)lysine; alternate occurs at positions 6 and 10. Lysine 6 is modified (N6-acetyllysine; alternate). Positions 7–19 are enriched in basic residues; that stretch reads QGGKARAKAKTRS. An N6-lactoyllysine; alternate modification is found at lysine 10. N6-succinyllysine; alternate is present on lysine 10. Residues lysine 14 and lysine 16 each participate in a glycyl lysine isopeptide (Lys-Gly) (interchain with G-Cter in ubiquitin) cross-link. Residue lysine 37 is modified to N6-(2-hydroxyisobutyryl)lysine; alternate. Lysine 37 carries the N6-(beta-hydroxybutyryl)lysine; alternate modification. Lysine 37 is subject to N6-crotonyllysine; alternate. 2 positions are modified to N6-(2-hydroxyisobutyryl)lysine: lysine 75 and lysine 76. Lysine 96 bears the N6-(2-hydroxyisobutyryl)lysine; alternate mark. Lysine 96 is subject to N6-succinyllysine; alternate. Lysine 96 carries the N6-glutaryllysine; alternate modification. Glutamine 105 is subject to N5-methylglutamine. Lysine 119 is modified (N6-(2-hydroxyisobutyryl)lysine; alternate). N6-crotonyllysine; alternate occurs at positions 119 and 120. N6-glutaryllysine; alternate is present on residues lysine 119 and lysine 120. Residue lysine 120 forms a Glycyl lysine isopeptide (Lys-Gly) (interchain with G-Cter in ubiquitin); alternate linkage. Threonine 121 is subject to Phosphothreonine; by DCAF1. Lysine 126 carries the N6-crotonyllysine; alternate modification. Residue lysine 126 is modified to N6-glutaryllysine; alternate.

The protein belongs to the histone H2A family. As to quaternary structure, the nucleosome is a histone octamer containing two molecules each of H2A, H2B, H3 and H4 assembled in one H3-H4 heterotetramer and two H2A-H2B heterodimers. The octamer wraps approximately 147 bp of DNA. Deiminated on Arg-4 in granulocytes upon calcium entry. In terms of processing, monoubiquitination of Lys-120 (H2AK119Ub) by RING1, TRIM37 and RNF2/RING2 complex gives a specific tag for epigenetic transcriptional repression and participates in X chromosome inactivation of female mammals. It is involved in the initiation of both imprinted and random X inactivation. Ubiquitinated H2A is enriched in inactive X chromosome chromatin. Ubiquitination of H2A functions downstream of methylation of 'Lys-27' of histone H3 (H3K27me). H2AK119Ub by RNF2/RING2 can also be induced by ultraviolet and may be involved in DNA repair. Following DNA double-strand breaks (DSBs), it is ubiquitinated through 'Lys-63' linkage of ubiquitin moieties by the E2 ligase UBE2N and the E3 ligases RNF8 and RNF168, leading to the recruitment of repair proteins to sites of DNA damage. Ubiquitination at Lys-14 and Lys-16 (H2AK13Ub and H2AK15Ub, respectively) in response to DNA damage is initiated by RNF168 that mediates monoubiquitination at these 2 sites, and 'Lys-63'-linked ubiquitin are then conjugated to monoubiquitin; RNF8 is able to extend 'Lys-63'-linked ubiquitin chains in vitro. H2AK119Ub and ionizing radiation-induced 'Lys-63'-linked ubiquitination (H2AK13Ub and H2AK15Ub) are distinct events. Post-translationally, phosphorylation on Ser-2 (H2AS1ph) is enhanced during mitosis. Phosphorylation on Ser-2 by RPS6KA5/MSK1 directly represses transcription. Acetylation of H3 inhibits Ser-2 phosphorylation by RPS6KA5/MSK1. Phosphorylation at Thr-121 (H2AT120ph) by DCAF1 is present in the regulatory region of many tumor suppresor genes and down-regulates their transcription. Symmetric dimethylation on Arg-4 by the PRDM1/PRMT5 complex may play a crucial role in the germ-cell lineage. In terms of processing, glutamine methylation at Gln-105 (H2AQ104me) by FBL is specifically dedicated to polymerase I. It is present at 35S ribosomal DNA locus and impairs binding of the FACT complex. Post-translationally, crotonylation (Kcr) is specifically present in male germ cells and marks testis-specific genes in post-meiotic cells, including X-linked genes that escape sex chromosome inactivation in haploid cells. Crotonylation marks active promoters and enhancers and confers resistance to transcriptional repressors. It is also associated with post-meiotically activated genes on autosomes. Lactylated in macrophages by EP300/P300 by using lactoyl-CoA directly derived from endogenous or exogenous lactate, leading to stimulates gene transcription.

Its subcellular location is the nucleus. It is found in the chromosome. Functionally, core component of nucleosome. Nucleosomes wrap and compact DNA into chromatin, limiting DNA accessibility to the cellular machineries which require DNA as a template. Histones thereby play a central role in transcription regulation, DNA repair, DNA replication and chromosomal stability. DNA accessibility is regulated via a complex set of post-translational modifications of histones, also called histone code, and nucleosome remodeling. The chain is Histone H2A type 1-E from Rattus norvegicus (Rat).